The sequence spans 78 residues: UPF0349 protein ABC2936 (78 aa).

The protein belongs to the UPF0349 family.

In Shouchella clausii (strain KSM-K16) (Alkalihalobacillus clausii), this protein is UPF0349 protein ABC2936.